Reading from the N-terminus, the 212-residue chain is Ribonuclease HII (212 aa).

The 191-residue stretch at 22–212 (ILIAGLDEAG…APLKGMIDGL (191 aa)) folds into the RNase H type-2 domain. Aspartate 28, glutamate 29, and aspartate 123 together coordinate a divalent metal cation.

This sequence belongs to the RNase HII family. The cofactor is Mn(2+). It depends on Mg(2+) as a cofactor.

It is found in the cytoplasm. The enzyme catalyses Endonucleolytic cleavage to 5'-phosphomonoester.. Functionally, endonuclease that specifically degrades the RNA of RNA-DNA hybrids. This Dehalococcoides mccartyi (strain ATCC BAA-2100 / JCM 16839 / KCTC 5957 / BAV1) protein is Ribonuclease HII.